We begin with the raw amino-acid sequence, 480 residues long: MSSAFKAMRLHLTCPLPKQVINIPQTLFSYLITNQRAINNSCKPVKTSNAKKPKLPTTKLSWEERLSDTVTPLWRMTYEDQLQWKYEHQKKILLKMMKELSQDPTRAFSDHLNFPLLPIVASPVRDGYRNKSTFSVNKGIDGNPKTLGFYIGTGKAGNIVCVHADHLLSIPSKHKMVARCYEDFIRLSPLRPCILFDDGGHWREITIRTNSTGHTMAIVYFHPQSLTPEETDIHKAALVEYFTQGPGAICQLDSLYFQETTMTRCSHEQSQYQLLYGQTHIYEEVLGFKFRISPDSFFQVNREAAEALYKTVAELSQPCVGGTLLDVCCGTGAIGISLSPQMERVIGIELIEQAVEDAKFNAALNRVCNCEFLAGKAEVVLPDLMGSLSSDGGLTAVVNPSRAGLHYRVVRALRNHSAIRRLVYISCKPDGEAMRNFRELCCSVGLVRRITGEAFKPVVAVPVDLFPHTPHCELVLVFER.

Residues glutamine 299, glutamate 349, and asparagine 399 each contribute to the S-adenosyl-L-methionine site. Cysteine 427 functions as the Nucleophile in the catalytic mechanism. Glutamate 473 acts as the Proton acceptor in catalysis.

This sequence belongs to the class I-like SAM-binding methyltransferase superfamily. RNA M5U methyltransferase family.

The protein resides in the mitochondrion. The catalysed reaction is uridine(54) in tRNA + S-adenosyl-L-methionine = 5-methyluridine(54) in tRNA + S-adenosyl-L-homocysteine + H(+). The enzyme catalyses a uridine in 12S rRNA + S-adenosyl-L-methionine = a 5-methyluridine in 12S rRNA + S-adenosyl-L-homocysteine + H(+). In terms of biological role, mitochondrial S-adenosyl-L-methionine-dependent methyltransferase that catalyzes the formation of 5-methyl-uridine in tRNAs and 12S rRNA. Catalyzes the methylation of uridine at position 54 (m5U54) in all tRNAs. Specifically methylates the uridine in position 429 of 12S rRNA (m5U429). Does not affect RNA stability or mitochondrial translation. The polypeptide is tRNA (uracil-5-)-methyltransferase homolog B (trmt2b) (Danio rerio (Zebrafish)).